A 116-amino-acid polypeptide reads, in one-letter code: Chondroitin proteoglycan 7 (116 aa).

The first 19 residues, 1–19 (MQTITILALIACVAVPIFA), serve as a signal peptide directing secretion. Positions 29–102 (DVVESSGEGS…NAVVASDSPK (74 aa)) are disordered. Low complexity-rich tracts occupy residues 32–41 (ESSGEGSGES) and 48–58 (VESSGEGSGES). O-linked (Xyl...) (chondroitin sulfate) serine glycosylation is found at serine 68, serine 72, serine 76, serine 84, and serine 88.

The protein is Chondroitin proteoglycan 7 of Caenorhabditis elegans.